A 70-amino-acid chain; its full sequence is Dermaseptin-PH (70 aa).

Residues 1 to 22 (MDILKKSLFLILFLGVVSLSIC) form the signal peptide. Positions 23–44 (EEEKRENEEEMEQDDEQSEMKR) are excised as a propeptide. The residue at position 67 (Gln67) is a Glutamine amide. The propeptide occupies 68-70 (GGQ).

Belongs to the frog skin active peptide (FSAP) family. Expressed by the skin glands.

It is found in the secreted. It localises to the target cell membrane. Its function is as follows. Antimicrobial peptide which inhibits the growth of Gram-negative (MIC=16-64 uM) and Gram-positive bacteria (MIC=32 uM), and pathogenic yeast Candida albicans (MIC=16 uM). Shows a broad-spectrum of anticancer activities against several cancer cell lines. Also shows slight cytotoxicity on human dermal microvascular endothelium cells (IC(50)=4.85 uM). Induces low hemolysis against horse erythrocytes. This chain is Dermaseptin-PH, found in Pithecopus hypochondrialis (Orange-legged leaf frog).